We begin with the raw amino-acid sequence, 150 residues long: SsrA-binding protein (150 aa).

Belongs to the SmpB family.

It localises to the cytoplasm. Required for rescue of stalled ribosomes mediated by trans-translation. Binds to transfer-messenger RNA (tmRNA), required for stable association of tmRNA with ribosomes. tmRNA and SmpB together mimic tRNA shape, replacing the anticodon stem-loop with SmpB. tmRNA is encoded by the ssrA gene; the 2 termini fold to resemble tRNA(Ala) and it encodes a 'tag peptide', a short internal open reading frame. During trans-translation Ala-aminoacylated tmRNA acts like a tRNA, entering the A-site of stalled ribosomes, displacing the stalled mRNA. The ribosome then switches to translate the ORF on the tmRNA; the nascent peptide is terminated with the 'tag peptide' encoded by the tmRNA and targeted for degradation. The ribosome is freed to recommence translation, which seems to be the essential function of trans-translation. This is SsrA-binding protein from Borreliella burgdorferi (strain ATCC 35210 / DSM 4680 / CIP 102532 / B31) (Borrelia burgdorferi).